We begin with the raw amino-acid sequence, 408 residues long: Arginine biosynthesis bifunctional protein ArgJ (408 aa).

Substrate contacts are provided by T158, K184, T195, E281, N403, and T408. The Nucleophile role is filled by T195.

The protein belongs to the ArgJ family. As to quaternary structure, heterotetramer of two alpha and two beta chains.

It localises to the cytoplasm. The enzyme catalyses N(2)-acetyl-L-ornithine + L-glutamate = N-acetyl-L-glutamate + L-ornithine. It catalyses the reaction L-glutamate + acetyl-CoA = N-acetyl-L-glutamate + CoA + H(+). The protein operates within amino-acid biosynthesis; L-arginine biosynthesis; L-ornithine and N-acetyl-L-glutamate from L-glutamate and N(2)-acetyl-L-ornithine (cyclic): step 1/1. Its pathway is amino-acid biosynthesis; L-arginine biosynthesis; N(2)-acetyl-L-ornithine from L-glutamate: step 1/4. Catalyzes two activities which are involved in the cyclic version of arginine biosynthesis: the synthesis of N-acetylglutamate from glutamate and acetyl-CoA as the acetyl donor, and of ornithine by transacetylation between N(2)-acetylornithine and glutamate. This Shouchella clausii (strain KSM-K16) (Alkalihalobacillus clausii) protein is Arginine biosynthesis bifunctional protein ArgJ.